Consider the following 275-residue polypeptide: uncharacterized protein (275 aa).

A run of 6 helical transmembrane segments spans residues L25–A45, L70–I90, I107–V127, F149–F169, I203–A223, and I247–I267.

It is found in the cell membrane. This is an uncharacterized protein from Bacillus subtilis (strain 168).